A 718-amino-acid chain; its full sequence is Ribonuclease J (718 aa).

The disordered stretch occupies residues 1 to 130 (MNDSRNRGRK…RGNRGGGRRN (130 aa)). Composition is skewed to low complexity over residues 55–91 (AAQG…NNNR) and 100–118 (SGNA…NRQG). Zn(2+) contacts are provided by H220, H222, D224, H225, H287, and D309. 510–514 (HTSGH) provides a ligand contact to substrate. H536 serves as a coordination point for Zn(2+).

The protein belongs to the metallo-beta-lactamase superfamily. RNA-metabolizing metallo-beta-lactamase-like family. Bacterial RNase J subfamily. As to quaternary structure, homodimer, may be a subunit of the RNA degradosome. Zn(2+) serves as cofactor.

It is found in the cytoplasm. Functionally, an RNase that has 5'-3' exonuclease and possibly endoonuclease activity. Involved in maturation of rRNA and in some organisms also mRNA maturation and/or decay. This chain is Ribonuclease J, found in Corynebacterium glutamicum (strain ATCC 13032 / DSM 20300 / JCM 1318 / BCRC 11384 / CCUG 27702 / LMG 3730 / NBRC 12168 / NCIMB 10025 / NRRL B-2784 / 534).